The sequence spans 132 residues: Small ribosomal subunit protein uS8 (132 aa).

The protein belongs to the universal ribosomal protein uS8 family. As to quaternary structure, part of the 30S ribosomal subunit. Contacts proteins S5 and S12.

In terms of biological role, one of the primary rRNA binding proteins, it binds directly to 16S rRNA central domain where it helps coordinate assembly of the platform of the 30S subunit. This is Small ribosomal subunit protein uS8 from Cereibacter sphaeroides (strain ATCC 17029 / ATH 2.4.9) (Rhodobacter sphaeroides).